The following is a 1745-amino-acid chain: Tight junction protein 1 (1745 aa).

The PDZ 1 domain occupies 23–110 (TVTLHRAPGF…NAKITIRRKK (88 aa)). A compositionally biased stretch (basic residues) spans 102-112 (AKITIRRKKKV). A disordered region spans residues 102 to 189 (AKITIRRKKK…QPAKPTKVTL (88 aa)). Over residues 123–136 (PVSDNEDDSYDEEV) the composition is skewed to acidic residues. Phosphoserine is present on Ser125. Tyr132 is modified (phosphotyrosine). The span at 149–175 (RRSEKSWARDRSASRERSLSPRSDRRS) shows a compositional bias: basic and acidic residues. Residues Ser175, Ser178, and Ser179 each carry the phosphoserine modification. Thr185 is modified (phosphothreonine). The 79-residue stretch at 186–264 (KVTLVKSRKN…KLKMVVQRDE (79 aa)) folds into the PDZ 2 domain. Ser212 and Ser241 each carry phosphoserine. Thr267 carries the phosphothreonine modification. Ser275, Ser277, Ser280, Ser284, Ser290, Ser294, Ser297, Ser300, Ser323, Ser329, Ser334, Ser337, and Ser353 each carry phosphoserine. The interval 296–364 (ASDHSGRSHD…PVKHVDDHPP (69 aa)) is disordered. Positions 299 to 308 (HSGRSHDRPP) are enriched in basic and acidic residues. Positions 325 to 338 (HSTQSPQQPSNGSL) are enriched in polar residues. Thr354 bears the Phosphothreonine mark. The region spanning 421-502 (SMKLVKFRKG…GEEVTILAQK (82 aa)) is the PDZ 3 domain. The region spanning 516 to 584 (GDSFYIRTHF…PNKNRAEQLA (69 aa)) is the SH3 domain. The Guanylate kinase-like domain maps to 610–791 (SKRNLRKSRE…WYGALKEAIQ (182 aa)). A phosphoserine mark is found at Ser617 and Ser622. The occludin (OCLN)-binding region stretch occupies residues 633-876 (YERVVLREAG…GTPPESAITR (244 aa)). The residue at position 809 (Thr809) is a Phosphothreonine. Phosphoserine occurs at positions 810 and 821. Tyr822 bears the Phosphotyrosine mark. Ser824, Ser828, and Ser837 each carry phosphoserine. 2 disordered regions span residues 825–944 (APGS…SASA) and 956–1042 (LEEP…YEPQ). Phosphothreonine occurs at positions 846, 848, 854, 861, and 868. A compositionally biased stretch (basic and acidic residues) spans 879-892 (EPVREDSSGMHHEN). Low complexity predominate over residues 893 to 906 (QTYPPYSPQAQPQA). At Ser912 the chain carries Phosphoserine. Residues 998–1014 (DPAKVYRKEPYSEEMMR) are compositionally biased toward basic and acidic residues. Ser1071 is modified (phosphoserine). A disordered region spans residues 1090–1586 (QWSYYDDKQP…STQPPEFDSG (497 aa)). Over residues 1106-1124 (ENQHPRDLDSRQHPEEASE) the composition is skewed to basic and acidic residues. Phosphoserine is present on Ser1138. Phosphotyrosine occurs at positions 1139 and 1164. The segment at 1150–1370 (RTSTLRHEEQ…FDRRSFESKP (221 aa)) is actin-binding region (ABR). Basic and acidic residues-rich tracts occupy residues 1268–1285 (KMFE…KDVN) and 1335–1346 (PPEDIVRSNHYD). At Tyr1353 the chain carries Phosphotyrosine. Ser1365 is subject to Phosphoserine. Residues 1388–1399 (SQSQPNFSSYSS) show a composition bias toward low complexity. Residues 1401–1418 (GKPETDAVDRSFSEKRYD) show a composition bias toward basic and acidic residues. The residue at position 1411 (Ser1411) is a Phosphoserine. Residues 1431–1445 (SQYSQPAPPLSSSSL) show a composition bias toward low complexity. Polar residues-rich tracts occupy residues 1455 to 1468 (EGNS…NSYM) and 1510 to 1519 (AEQTQKTITP). Residues 1535–1544 (PFERKFESPK) are compositionally biased toward basic and acidic residues. Position 1542 is a phosphoserine (Ser1542). The span at 1561-1580 (SSKTPTSPKTLMKAHSSTQP) shows a compositional bias: polar residues. Residue Ser1614 is modified to Phosphoserine. A ZU5 domain is found at 1631 to 1745 (ATARGIFNSN…NCVSVLIDHF (115 aa)).

It belongs to the MAGUK family. In terms of assembly, homodimer. Forms heterodimers TJP3. Forms a heterodimer (via PDZ2 domain) with TJP2/ZO2 (via PDZ2 domain). Interacts with OCLN, CALM, claudins, CGN/cingulin, CXADR, GJD3 and UBN1. Interacts (via ZU5 domain) with CDC42BPB. Interacts (via PDZ domain) with GJA1. Interacts (via PDZ domains) with ANKRD2. Interacts with POPDC1 (via the C-terminus cytoplasmic tail). Interacts with GJA12 and KIRREL1. Interacts with HSPA4. Interacts (via ZU5 domain) with MYZAP. Interacts with DLL1. Interacts with USP53 (via the C-terminal region). Interacts with DNMBP (via C-terminal domain); required for the apical cell-cell junction localization of DNMBP. Interacts with SPEF1. Interacts (via N-terminus) with CTNNA1. Interacts with CLDN18. Interacts with CLDN16 (via TRV motif); this is a prerequisite for anchoring of CLDN16 at the tight junction. Interacts with PKP1; the interaction facilitates TJP1/ZO-1 localization to the plasma membrane. Interacts with PATJ (via PDZ1-6 domains); the interaction is required for attachment and extension of TJP1/ZO1 condensates along the apical cell interface. In terms of processing, phosphorylated at tyrosine redidues in response to epidermal growth factor (EGF). This response is dependent on an intact actin microfilament system. Dephosphorylated by PTPRJ. Expressed between ameloblasts, at ameloblast-ameloblast junctions and in the stratum intermedium during pre-secretory and secretory stages of tooth development (at protein level).

The protein localises to the cell membrane. It localises to the cell junction. Its subcellular location is the tight junction. It is found in the gap junction. The protein resides in the cytoplasm. The protein localises to the myofibril. It localises to the sarcomere. Its subcellular location is the i band. Functionally, tjp1, TjpP2, and Tjp3 are closely related scaffolding proteins that link tight junction (TJ) transmembrane proteins such as claudins, junctional adhesion molecules, and occludin to the actin cytoskeleton. Forms a multistranded TJP1/ZO1 condensate which elongates to form a tight junction belt, the belt is anchored at the apical cell membrane via interaction with PATJ. The tight junction acts to limit movement of substances through the paracellular space and as a boundary between the compositionally distinct apical and basolateral plasma membrane domains of epithelial and endothelial cells. Necessary for lumenogenesis, and particularly efficient epithelial polarization and barrier formation. Plays a role in the regulation of cell migration by targeting Cdc42bpb to the leading edge of migrating cells. Plays an important role in podosome formation and associated function, thus regulating cell adhesion and matrix remodeling. With Tjp2 and TJjp3, participates in the junctional retention and stability of the transcription factor Dbpa, but is not involved in its shuttling to the nucleus. May play a role in mediating cell morphology changes during ameloblast differentiation via its role in tight junctions. In Mus musculus (Mouse), this protein is Tight junction protein 1.